The primary structure comprises 514 residues: MSEHKKPLVLMILDGWGYREDEQSNAILAANTPVLDELWATRPRTLISASGFDVGLPDGQMGNSEVGHVNLGAGRVVYQDFTRITKAINDGEFDSTPALVDNIDKAVSADKAVHIMGLLSPGGVHSHEDHIVASIELAAKRGAKEVYFHGFLDGRDTPPRSAKASIERIEAVFAKLQCGRLASLIGRYYAMDRDNRWNRVEKAYNLLTLAQGDFSYPTGVSALEAAYERDENDEFVAASTITPAGAEPVQINDGDTVIFANFRADRAREITRAFVEPNFDGFAKQKSPALSAFVMMTEYAADIDAPVAFGPTPLVNVLGEWFEKHGKTQLRISETEKYAHVTFFFSGGREDEFNGETRELIPSPQVATYDLQPEMNSEMLTDKLVAAIKSGKYDAIICNYPNGDMVGHSGVFAAAVKACEAVDHCIGRVVAALNKYGGEALITADHGNAEQMANLKTGQAHTAHTSEPVPFIYVGRDATASEGKALSDVAPTMLHLMGMEQPTEMTGKPIMTLK.

Positions 14 and 64 each coordinate Mn(2+). Catalysis depends on Ser64, which acts as the Phosphoserine intermediate. Substrate contacts are provided by residues His125, 155-156 (RD), Arg187, Arg193, 263-266 (RADR), and Lys337. Asp404, His408, Asp445, His446, and His464 together coordinate Mn(2+).

This sequence belongs to the BPG-independent phosphoglycerate mutase family. As to quaternary structure, monomer. Requires Mn(2+) as cofactor.

It catalyses the reaction (2R)-2-phosphoglycerate = (2R)-3-phosphoglycerate. It participates in carbohydrate degradation; glycolysis; pyruvate from D-glyceraldehyde 3-phosphate: step 3/5. Its function is as follows. Catalyzes the interconversion of 2-phosphoglycerate and 3-phosphoglycerate. The protein is 2,3-bisphosphoglycerate-independent phosphoglycerate mutase of Pseudoalteromonas translucida (strain TAC 125).